The primary structure comprises 428 residues: UDP-N-acetylglucosamine 1-carboxyvinyltransferase 2 (428 aa).

22–23 serves as a coordination point for phosphoenolpyruvate; sequence KN. UDP-N-acetyl-alpha-D-glucosamine is bound at residue R92. Residue C116 is the Proton donor of the active site. 2-(S-cysteinyl)pyruvic acid O-phosphothioketal is present on C116. UDP-N-acetyl-alpha-D-glucosamine is bound by residues 121–125, D304, and I326; that span reads RPIDQ.

This sequence belongs to the EPSP synthase family. MurA subfamily.

It localises to the cytoplasm. It carries out the reaction phosphoenolpyruvate + UDP-N-acetyl-alpha-D-glucosamine = UDP-N-acetyl-3-O-(1-carboxyvinyl)-alpha-D-glucosamine + phosphate. The protein operates within cell wall biogenesis; peptidoglycan biosynthesis. Its function is as follows. Cell wall formation. Adds enolpyruvyl to UDP-N-acetylglucosamine. This Shouchella clausii (strain KSM-K16) (Alkalihalobacillus clausii) protein is UDP-N-acetylglucosamine 1-carboxyvinyltransferase 2.